The sequence spans 1159 residues: Dynein regulatory complex subunit 7 (1159 aa).

LRR repeat units lie at residues 21–46 (MEARRTYRLNMGYAGLKQLPPGFVEL), 51–74 (NPHITELELSSNDLTDLPDELEEF), 75–97 (RYLRILRLKYNQLKRIPAVVYRL), 99–120 (QLMVFDASGNRIQKVDDAIGHL), 121–143 (SLLKELDVSGNEITTLPESLSTL), 144–166 (PKLEVLQVENNRLELLPESLGEL), 168–189 (GVIKMDLSTNNLRYLPASMGQL), 190–212 (KKVQRIDVGNNLLTKVPPSMGHL), and 214–235 (TLKEFNLRYNHLDDRYKAKVEE). Kelch repeat units lie at residues 309–360 (MLLI…YDEE), 363–413 (RLVV…FWAG), 415–463 (MVLF…IGHG), 465–513 (LLFV…VHRD), and 515–571 (LYLL…LWNG). A compositionally biased stretch (basic and acidic residues) spans 827–837 (EDRGMRSRADG). The tract at residues 827 to 857 (EDRGMRSRADGNADESETEGGGGLDDGEGVE) is disordered. Residues 1050–1137 (VRIKAEESEE…RRLRRHEEQA (88 aa)) are a coiled coil.

This sequence belongs to the DRC7 family. Component of the nexin-dynein regulatory complex (N-DRC). Interacts with DRC5. Phosphorylated.

It is found in the cell projection. The protein localises to the cilium. It localises to the flagellum. The protein resides in the cytoplasm. Its subcellular location is the cytoskeleton. It is found in the cilium axoneme. The protein localises to the flagellum axoneme. Its function is as follows. Component of the nexin-dynein regulatory complex (N-DRC) a key regulator of ciliary/flagellar motility which maintains the alignment and integrity of the distal axoneme and regulates microtubule sliding in motile axonemes. Involved in the regulation of flagellar motility. The polypeptide is Dynein regulatory complex subunit 7 (DRC7) (Chlamydomonas reinhardtii (Chlamydomonas smithii)).